The primary structure comprises 426 residues: MTEIVDITAREILDSRGNPTVEVDVILEDGAMGRAAVPSGASTGAHEAVEKRDGDKARYLGKGVRQAVDAVNGEIYDALSGSDAEDQRRIDRMLIELDGTPNKSRLGANAILGVSLATAKAAASSSALPLYKYVGGVSARILPVPMMNIINGGAHADNPIDIQEFMILPTGAETFSEALRMGAEIFHALKKQLKDAGHNTNVGDEGGFAPNIGSAEEALAFIVKAGEGAGYRCGEDFHLGLDVASTEFFKNGKYVMEGEGKTVDPAGMVEYLAGLVSKFPIVTIEDGCAEDDFDGWKILTERLGGKVQLVGDDLFVTNPERLAVGIEKGLANSILVKVNQIGTLSETLDAVDMAHRNSYTAVMSHRSGETEDSTIADLSVATNCGQIKTGSLARSDRTAKYNQLLRIEEELGDQAIYAGRRALRAL.

Residue Gln-163 participates in (2R)-2-phosphoglycerate binding. Glu-205 (proton donor) is an active-site residue. 3 residues coordinate Mg(2+): Asp-242, Glu-285, and Asp-312. (2R)-2-phosphoglycerate is bound by residues Lys-337, Arg-366, Ser-367, and Lys-388. Lys-337 functions as the Proton acceptor in the catalytic mechanism.

Belongs to the enolase family. Requires Mg(2+) as cofactor.

It localises to the cytoplasm. It is found in the secreted. The protein resides in the cell surface. The enzyme catalyses (2R)-2-phosphoglycerate = phosphoenolpyruvate + H2O. It participates in carbohydrate degradation; glycolysis; pyruvate from D-glyceraldehyde 3-phosphate: step 4/5. In terms of biological role, catalyzes the reversible conversion of 2-phosphoglycerate (2-PG) into phosphoenolpyruvate (PEP). It is essential for the degradation of carbohydrates via glycolysis. The chain is Enolase from Phenylobacterium zucineum (strain HLK1).